The following is an 871-amino-acid chain: Protein translocase subunit SecA (871 aa).

Residues Gln80, 98–102, and Asp537 contribute to the ATP site; that span reads GEGKT. A disordered region spans residues 852-871; sequence MEKGKKKGGSHGLGKIRVKR. The segment covering 855–871 has biased composition (basic residues); the sequence is GKKKGGSHGLGKIRVKR.

It belongs to the SecA family. As to quaternary structure, monomer and homodimer. Part of the essential Sec protein translocation apparatus which comprises SecA, SecYEG and auxiliary proteins SecDF. Other proteins may also be involved.

It is found in the cell inner membrane. The protein resides in the cytoplasm. It carries out the reaction ATP + H2O + cellular proteinSide 1 = ADP + phosphate + cellular proteinSide 2.. Functionally, part of the Sec protein translocase complex. Interacts with the SecYEG preprotein conducting channel. Has a central role in coupling the hydrolysis of ATP to the transfer of proteins into and across the cell membrane, serving as an ATP-driven molecular motor driving the stepwise translocation of polypeptide chains across the membrane. The protein is Protein translocase subunit SecA of Thermotoga neapolitana (strain ATCC 49049 / DSM 4359 / NBRC 107923 / NS-E).